The sequence spans 87 residues: MKPIVYMLLFCAFTVVILGHPNNHGALIPHHDKLPNGESCTRPGYSCSESSQCCTPVDGETFTYGCGRAWMEGSKICYICNRESSMC.

The signal sequence occupies residues 1–19 (MKPIVYMLLFCAFTVVILG). Disulfide bonds link C40–C54, C40–C77, C53–C66, and C80–C87.

The protein belongs to the neurotoxin 27 (Jztx-72) family. ICK-41 subfamily. As to expression, expressed by the venom gland.

Its subcellular location is the secreted. Functionally, probable neurotoxin with ion channel impairing activity. This chain is Toxin ICK-41, found in Trittame loki (Brush-footed trapdoor spider).